Reading from the N-terminus, the 106-residue chain is Small ribosomal subunit protein bS18 (106 aa).

The tract at residues 1-39 (MNGRNNDMGRNGGADYDDRDFGRTPDLNADAPGRRRTGR) is disordered.

This sequence belongs to the bacterial ribosomal protein bS18 family. In terms of assembly, part of the 30S ribosomal subunit. Forms a tight heterodimer with protein bS6.

Its function is as follows. Binds as a heterodimer with protein bS6 to the central domain of the 16S rRNA, where it helps stabilize the platform of the 30S subunit. This chain is Small ribosomal subunit protein bS18, found in Sorangium cellulosum (strain So ce56) (Polyangium cellulosum (strain So ce56)).